A 513-amino-acid chain; its full sequence is Voltage-gated potassium channel regulatory subunit KCNG1 (513 aa).

Residues 1–224 are Cytoplasmic-facing; it reads MTLLPGDNSD…DMVERPHSGL (224 aa). The interval 184–204 is disordered; sequence EEDDALDSEGRDSEGPAEGEG. Residues 191-204 are compositionally biased toward basic and acidic residues; the sequence is SEGRDSEGPAEGEG. The chain crosses the membrane as a helical span at residues 225–246; the sequence is PGKVFACLSVLFVTVTAVNLSV. Residues 247-267 lie on the Extracellular side of the membrane; it reads STLPSLREEEEQGHCSQMCHN. The helical transmembrane segment at 268–289 threads the bilayer; sequence VFIVESVCVGWFSLEFLLRLIQ. Residues 290-300 are Cytoplasmic-facing; sequence APSKFAFLRSP. A helical membrane pass occupies residues 301–321; sequence LTLIDLVAILPYYITLLVDGA. Topologically, residues 322–338 are extracellular; sequence AAGRRKPGAGNSYLDKV. The helical; Voltage-sensor transmembrane segment at 339–359 threads the bilayer; the sequence is GLVLRVLRALRILYVMRLARH. Over 360 to 374 the chain is Cytoplasmic; that stretch reads SLGLQTLGLTARRCT. A helical transmembrane segment spans residues 375–396; the sequence is REFGLLLLFLCVAIALFAPLLY. At 397–411 the chain is on the extracellular side; that stretch reads VIENEMADSPEFTSI. The helical intramembrane region spans 412-423; the sequence is PACYWWAVITMT. The Selectivity filter motif lies at 424-429; it reads TVGYGD. The stretch at 424-431 is an intramembrane region; it reads TVGYGDMV. Topologically, residues 432-438 are extracellular; the sequence is PRSTPGQ. The chain crosses the membrane as a helical span at residues 439-467; sequence VVALSSILSGILLMAFPVTSIFHTFSRSY. The Cytoplasmic portion of the chain corresponds to 468 to 513; that stretch reads LELKQEQERVMFRRAQFLIKTKSQLSVSQDSDILFGSASSDTRDNN.

It belongs to the potassium channel family. G (TC 1.A.1.2) subfamily. Kv6.1/KCNG1 sub-subfamily. In terms of assembly, heterotetramer with KCNB1. Heterotetramer with KCNB2. Expressed in brain and placenta, and at much lower levels in kidney and pancreas.

Its subcellular location is the cell membrane. Its function is as follows. Regulatory alpha-subunit of the voltage-gated potassium (Kv) channel which, when coassembled with KCNB1 or KCNB2, can modulate their expression and their gating kinetics by acting on deactivation upon repolarization and inactivation during maintained depolarization. Potassium channel subunit that does not form functional channels by itself. The protein is Voltage-gated potassium channel regulatory subunit KCNG1 of Homo sapiens (Human).